The primary structure comprises 1198 residues: Chromosome partition protein Smc (1198 aa).

40-47 (PNGSGKSN) contributes to the ATP binding site. Coiled-coil stretches lie at residues 175–211 (ITKYRMRKREALKRLDETEHNLERIRDILAEIEGQLG) and 322–524 (LGEQ…LAKK). The region spanning 534-647 (CGTLADLLQV…VTDMEAATRV (114 aa)) is the SMC hinge domain. Residues 687 to 1042 (SREIQELRQE…AELDKTMSER (356 aa)) are a coiled coil. Residues 785–818 (AEEQSKLTDSIQEAQEALARQEEKNRQASREMEQ) form a disordered region. Residues 803–818 (ARQEEKNRQASREMEQ) show a composition bias toward basic and acidic residues.

This sequence belongs to the SMC family. In terms of assembly, homodimer.

Its subcellular location is the cytoplasm. In terms of biological role, required for chromosome condensation and partitioning. In Desulfitobacterium hafniense (strain Y51), this protein is Chromosome partition protein Smc.